Here is a 294-residue protein sequence, read N- to C-terminus: MTEKKHKNSLSLVHSIKEELKKDKLAMISTIFLVAVFLIVYIYSMFLKQSNYVDVNIMDQYLAPLTTGHLLGTDNGGRDIIMMLMISARNSFNIAFAVTLITLVVGNILGVITGYFGGRFDLIFMRFTDFVMILPSMMIIIVFVTIIPRFNSWSLIGIISIFSWIGTTRLIRARTMTEVNRDYVQASKTSGTSDFKIMFREIWPNLSTLVIAEATLVFAGNIGLETGLSFLGFGLPAGTPSLGTMINEATNPETMTDKPWTWVPATVVILIVVLAIIFIGNALRRVADQRQATR.

A run of 6 helical transmembrane segments spans residues 27 to 47, 94 to 114, 127 to 147, 151 to 171, 202 to 224, and 260 to 280; these read MISTIFLVAVFLIVYIYSMFL, IAFAVTLITLVVGNILGVITG, FTDFVMILPSMMIIIVFVTII, NSWSLIGIISIFSWIGTTRLI, IWPNLSTLVIAEATLVFAGNIGL, and WTWVPATVVILIVVLAIIFIG. The region spanning 88–280 is the ABC transmembrane type-1 domain; that stretch reads ARNSFNIAFA…IVVLAIIFIG (193 aa).

It belongs to the binding-protein-dependent transport system permease family. OppBC subfamily. As to quaternary structure, the complex is composed of two ATP-binding proteins (OppD and OppF), two transmembrane proteins (OppB and OppC) and a solute-binding protein (OppA).

The protein resides in the cell membrane. In terms of biological role, part of the ABC transporter complex OppABCDF involved in the uptake of oligopeptides. Probably responsible for the translocation of the substrate across the membrane. The chain is Oligopeptide transport system permease protein OppC from Lactococcus lactis subsp. cremoris (strain SK11).